Consider the following 138-residue polypeptide: von Willebrand factor C domain-containing protein 2-like (138 aa).

Residues 1 to 21 (MALHIHEACILLLVIPGLVTS) form the signal peptide. The VWFC domain occupies 51 to 110 (KGCVDDSGFVYKLGERFFPGHSNCPCVCALDGPVCDQPECPKIHPKCTKVEHNGCCPECK).

In terms of assembly, peripherally associated with AMPAR complex. AMPAR complex consists of an inner core made of 4 pore-forming GluA/GRIA proteins (GRIA1, GRIA2, GRIA3 and GRIA4) and 4 major auxiliary subunits arranged in a twofold symmetry. One of the two pairs of distinct binding sites is occupied either by CNIH2, CNIH3 or CACNG2, CACNG3. The other harbors CACNG2, CACNG3, CACNG4, CACNG8 or GSG1L. This inner core of AMPAR complex is complemented by outer core constituents binding directly to the GluA/GRIA proteins at sites distinct from the interaction sites of the inner core constituents. Outer core constituents include at least PRRT1, PRRT2, CKAMP44/SHISA9, FRRS1L and NRN1. The proteins of the inner and outer core serve as a platform for other, more peripherally associated AMPAR constituents, including VWC2L. Alone or in combination, these auxiliary subunits control the gating and pharmacology of the AMPAR complex and profoundly impact their biogenesis and protein processing.

The protein resides in the secreted. It localises to the synapse. Functionally, may play a role in neurogenesis. May play a role in bone differentiation and matrix mineralization. The sequence is that of von Willebrand factor C domain-containing protein 2-like (VWC2L) from Macaca fascicularis (Crab-eating macaque).